The primary structure comprises 154 residues: Ribosomal RNA large subunit methyltransferase H (154 aa).

S-adenosyl-L-methionine-binding positions include leucine 76, glycine 103, and 122–127 (LSPLTL).

Belongs to the RNA methyltransferase RlmH family. In terms of assembly, homodimer.

Its subcellular location is the cytoplasm. The enzyme catalyses pseudouridine(1915) in 23S rRNA + S-adenosyl-L-methionine = N(3)-methylpseudouridine(1915) in 23S rRNA + S-adenosyl-L-homocysteine + H(+). Its function is as follows. Specifically methylates the pseudouridine at position 1915 (m3Psi1915) in 23S rRNA. This Wolinella succinogenes (strain ATCC 29543 / DSM 1740 / CCUG 13145 / JCM 31913 / LMG 7466 / NCTC 11488 / FDC 602W) (Vibrio succinogenes) protein is Ribosomal RNA large subunit methyltransferase H.